Here is a 931-residue protein sequence, read N- to C-terminus: Netrin receptor UNC5C (931 aa).

Positions 1–39 are cleaved as a signal peptide; the sequence is MGKGLEGTAARCGLGMGYLLHSVVLPALAVLGASRPGSA. Topologically, residues 40–380 are extracellular; the sequence is AQDDDFFHEL…APDSDDVALY (341 aa). The 98-residue stretch at 62-159 folds into the Ig-like domain; it reads PHFLIEPEEA…AGTTKSRKAY (98 aa). 9 cysteine pairs are disulfide-bonded: cysteine 83-cysteine 144, cysteine 95-cysteine 142, cysteine 188-cysteine 239, cysteine 272-cysteine 309, cysteine 276-cysteine 313, cysteine 287-cysteine 299, cysteine 328-cysteine 362, cysteine 332-cysteine 367, and cysteine 340-cysteine 352. Positions 161–256 constitute an Ig-like C2-type domain; sequence RIAYLRKTFE…KRKSTTATVI (96 aa). N-linked (GlcNAc...) asparagine glycosylation is present at asparagine 236. TSP type-1 domains are found at residues 260 to 314 and 316 to 368; these read NGGW…TLCP and DGKW…GLCM. Asparagine 361 is a glycosylation site (N-linked (GlcNAc...) asparagine). A helical membrane pass occupies residues 381-401; sequence VGIVIAVIVCLAISVVVALFV. Over 402-931 the chain is Cytoplasmic; that stretch reads YRKNHRDFES…VVSLAAEGNY (530 aa). In terms of domain architecture, ZU5 spans 530 to 664; sequence CTAFGTFNSL…EACHILTETL (135 aa). The region spanning 850-929 is the Death domain; the sequence is QKLCSSLDAP…ETVVSLAAEG (80 aa).

This sequence belongs to the unc-5 family. As to expression, restricted to proprioceptive neurons.

The protein resides in the cell membrane. It is found in the cell surface. Its subcellular location is the synapse. The protein localises to the synaptosome. It localises to the cell projection. The protein resides in the axon. It is found in the dendrite. Its subcellular location is the growth cone. The protein localises to the lamellipodium. It localises to the filopodium. Functionally, receptor for netrin required for axon guidance. Mediates axon repulsion of neuronal growth cones in the developing nervous system upon ligand binding. Involved in dorsal root ganglion axon projection towards the spinal cord. This chain is Netrin receptor UNC5C (UNC5C), found in Gallus gallus (Chicken).